Here is a 184-residue protein sequence, read N- to C-terminus: Large ribosomal subunit protein bL9 (184 aa).

A disordered region spans residues 160 to 184 (LQNQKSEQQEAEQDANKEATDGDDS). Over residues 173–184 (DANKEATDGDDS) the composition is skewed to basic and acidic residues.

It belongs to the bacterial ribosomal protein bL9 family.

Binds to the 23S rRNA. The chain is Large ribosomal subunit protein bL9 from Wolbachia pipientis wMel.